A 100-amino-acid polypeptide reads, in one-letter code: MAKKNMIQRELKRQKCVLKYETRRQLLKKQITLASTLREKLMLHRQLQKLPRNSSAVRLRNRCMITGRSRGYHRDFGLSRNVLREMAHQGLLPGVVKSSW.

This sequence belongs to the universal ribosomal protein uS14 family. Part of the 30S ribosomal subunit.

Its subcellular location is the plastid. It localises to the chloroplast. Binds 16S rRNA, required for the assembly of 30S particles. The protein is Small ribosomal subunit protein uS14c of Stigeoclonium helveticum (Green alga).